The chain runs to 22 residues: Defensin D1 (22 aa).

It belongs to the DEFL family. Group II subfamily.

Functionally, antimicrobial peptide. Active against Gram-positive and Gram-negative bacterial pathogens. The sequence is that of Defensin D1 from Spinacia oleracea (Spinach).